The sequence spans 318 residues: NADH-ubiquinone oxidoreductase chain 1 (318 aa).

8 consecutive transmembrane segments (helical) span residues 2–22 (FMINLLLTIVPILLAVAFLTL), 68–88 (ITMFIIAPILALTLALTMWTP), 100–120 (LGVLFMLAMSSLAVYSILWSG), 146–166 (LAIILLSVLLLSGSFALPALI), 171–191 (HMWLIIPSWPLAMMWFISTLA), 222–242 (LFFLAEYANIIMMNIFTTILF), 253–273 (ELYTINFALKATLLTISFLWV), and 294–314 (LPLTLALCMWHVTMPIITAGI).

It belongs to the complex I subunit 1 family.

It is found in the mitochondrion inner membrane. The catalysed reaction is a ubiquinone + NADH + 5 H(+)(in) = a ubiquinol + NAD(+) + 4 H(+)(out). Its function is as follows. Core subunit of the mitochondrial membrane respiratory chain NADH dehydrogenase (Complex I) that is believed to belong to the minimal assembly required for catalysis. Complex I functions in the transfer of electrons from NADH to the respiratory chain. The immediate electron acceptor for the enzyme is believed to be ubiquinone. The chain is NADH-ubiquinone oxidoreductase chain 1 (MT-ND1) from Coelops frithii (East Asian tailless leaf-nosed bat).